A 175-amino-acid polypeptide reads, in one-letter code: Protein MODIFYING WALL LIGNIN-1 (175 aa).

Residues 1–24 form the signal peptide; it reads MFIFLFGLAAFFLCLSAEFQKAKA. The Cytoplasmic segment spans residues 25–52; it reads LLRAQVFLKGKDLKWDGESCYLPENRAF. Residues 53–73 form a helical membrane-spanning segment; that stretch reads GLGIAALVCVSVAQIVGNVVI. Topologically, residues 74 to 86 are extracellular; it reads CRGFTKTDKTRTT. A helical transmembrane segment spans residues 87-107; sequence IFCIILLLFSWVNFAVAVTLI. Topologically, residues 108–135 are cytoplasmic; sequence SVGASMNREQIYGKGWLNRECYLVKDGV. Residues 136 to 156 traverse the membrane as a helical segment; the sequence is FAASGFLSVTTMAAILGAFAF. At 157-175 the chain is on the extracellular side; the sequence is KVKPSLQVENHDKRHTQNV.

Belongs to the DESIGUAL family. In terms of assembly, interacts with CRK19.

The protein localises to the cell membrane. Its function is as follows. Together with MWL2, contributes to secondary cell wall biology, specifically lignin biosynthesis. The sequence is that of Protein MODIFYING WALL LIGNIN-1 from Arabidopsis thaliana (Mouse-ear cress).